The sequence spans 89 residues: Small ribosomal subunit protein bS20 (89 aa).

Residues 1–26 (MANIKASKKDALTSEKRRKKNSSRRS) form a disordered region. A compositionally biased stretch (basic residues) spans 16–26 (KRRKKNSSRRS).

This sequence belongs to the bacterial ribosomal protein bS20 family.

Binds directly to 16S ribosomal RNA. The protein is Small ribosomal subunit protein bS20 of Buchnera aphidicola subsp. Acyrthosiphon pisum (strain 5A).